Consider the following 303-residue polypeptide: Sterol-4-alpha-carboxylate 3-dehydrogenase ERG26, decarboxylating (303 aa).

NADP(+) is bound by residues 8–9 and 30–32; these read SL and TAS. Substrate is bound at residue Ser-71. A disordered region spans residues 77–96; the sequence is PTQEPTSEENAHRYDENNAP. Residues Tyr-102, Lys-106, and 128-131 each bind NADP(+); that span reads IPGI. Tyr-102 lines the substrate pocket. Lys-106 functions as the Proton donor in the catalytic mechanism.

The protein belongs to the 3-beta-HSD family. In terms of assembly, heterotetramer of ERG25, ERG26, ERG27 and ERG28. ERG28 acts as a scaffold to tether ERG27 and other 4,4-demethylation-related enzymes, forming a demethylation enzyme complex, in the endoplasmic reticulum.

The protein localises to the endoplasmic reticulum membrane. Its pathway is steroid metabolism; ergosterol biosynthesis. Sterol-4-alpha-carboxylate 3-dehydrogenase; part of the third module of ergosterol biosynthesis pathway that includes the late steps of the pathway. ERG26 is a catalytic component of the C-4 demethylation complex that catalyzes the conversion of 4,4-dimethylfecosterol into fecosterol via 4-methylfecosterol. The third module or late pathway involves the ergosterol synthesis itself through consecutive reactions that mainly occur in the endoplasmic reticulum (ER) membrane. Firstly, the squalene synthase ERG9 catalyzes the condensation of 2 farnesyl pyrophosphate moieties to form squalene, which is the precursor of all steroids. Squalene synthase is crucial for balancing the incorporation of farnesyl diphosphate (FPP) into sterol and nonsterol isoprene synthesis. Secondly, squalene is converted into lanosterol by the consecutive action of the squalene epoxidase ERG1 and the lanosterol synthase ERG7. Then, the delta(24)-sterol C-methyltransferase ERG6 methylates lanosterol at C-24 to produce eburicol. Eburicol is the substrate of the sterol 14-alpha demethylase encoded by CYP51A, CYP51B and CYP51C, to yield 4,4,24-trimethyl ergosta-8,14,24(28)-trienol. CYP51B encodes the enzyme primarily responsible for sterol 14-alpha-demethylation, and plays an essential role in ascospore formation. CYP51A encodes an additional sterol 14-alpha-demethylase, induced on ergosterol depletion and responsible for the intrinsic variation in azole sensitivity. The third CYP51 isoform, CYP51C, does not encode a sterol 14-alpha-demethylase, but is required for full virulence on host wheat ears. The C-14 reductase ERG24 then reduces the C14=C15 double bond which leads to 4,4-dimethylfecosterol. A sequence of further demethylations at C-4, involving the C-4 demethylation complex containing the C-4 methylsterol oxidases ERG25, the sterol-4-alpha-carboxylate 3-dehydrogenase ERG26 and the 3-keto-steroid reductase ERG27, leads to the production of fecosterol via 4-methylfecosterol. ERG28 has a role as a scaffold to help anchor ERG25, ERG26 and ERG27 to the endoplasmic reticulum. The C-8 sterol isomerase ERG2 then catalyzes the reaction which results in unsaturation at C-7 in the B ring of sterols and thus converts fecosterol to episterol. The sterol-C5-desaturases ERG3A and ERG3BB then catalyze the introduction of a C-5 double bond in the B ring to produce 5-dehydroepisterol. The C-22 sterol desaturases ERG5A and ERG5B further convert 5-dehydroepisterol into ergosta-5,7,22,24(28)-tetraen-3beta-ol by forming the C-22(23) double bond in the sterol side chain. Finally, ergosta-5,7,22,24(28)-tetraen-3beta-ol is substrate of the C-24(28) sterol reductase ERG4 to produce ergosterol. This is Sterol-4-alpha-carboxylate 3-dehydrogenase ERG26, decarboxylating from Gibberella zeae (strain ATCC MYA-4620 / CBS 123657 / FGSC 9075 / NRRL 31084 / PH-1) (Wheat head blight fungus).